Consider the following 231-residue polypeptide: Ribose-5-phosphate isomerase A (231 aa).

Substrate-binding positions include Thr32 to Thr35, Asp85 to Asp88, and Lys98 to Gly101. Glu107 functions as the Proton acceptor in the catalytic mechanism. Substrate is bound at residue Lys125.

It belongs to the ribose 5-phosphate isomerase family. Homodimer.

It catalyses the reaction aldehydo-D-ribose 5-phosphate = D-ribulose 5-phosphate. The protein operates within carbohydrate degradation; pentose phosphate pathway; D-ribose 5-phosphate from D-ribulose 5-phosphate (non-oxidative stage): step 1/1. Its function is as follows. Catalyzes the reversible conversion of ribose-5-phosphate to ribulose 5-phosphate. In Paraburkholderia phymatum (strain DSM 17167 / CIP 108236 / LMG 21445 / STM815) (Burkholderia phymatum), this protein is Ribose-5-phosphate isomerase A.